We begin with the raw amino-acid sequence, 331 residues long: 6-phosphogluconolactonase (331 aa).

Belongs to the cycloisomerase 2 family.

It carries out the reaction 6-phospho-D-glucono-1,5-lactone + H2O = 6-phospho-D-gluconate + H(+). The protein operates within carbohydrate degradation; pentose phosphate pathway; D-ribulose 5-phosphate from D-glucose 6-phosphate (oxidative stage): step 2/3. Its function is as follows. Catalyzes the hydrolysis of 6-phosphogluconolactone to 6-phosphogluconate. This Sodalis glossinidius (strain morsitans) protein is 6-phosphogluconolactonase.